A 195-amino-acid chain; its full sequence is Protein GrpE (195 aa).

Belongs to the GrpE family. Homodimer.

Its subcellular location is the cytoplasm. Participates actively in the response to hyperosmotic and heat shock by preventing the aggregation of stress-denatured proteins, in association with DnaK and GrpE. It is the nucleotide exchange factor for DnaK and may function as a thermosensor. Unfolded proteins bind initially to DnaJ; upon interaction with the DnaJ-bound protein, DnaK hydrolyzes its bound ATP, resulting in the formation of a stable complex. GrpE releases ADP from DnaK; ATP binding to DnaK triggers the release of the substrate protein, thus completing the reaction cycle. Several rounds of ATP-dependent interactions between DnaJ, DnaK and GrpE are required for fully efficient folding. The sequence is that of Protein GrpE from Francisella tularensis subsp. holarctica (strain OSU18).